The primary structure comprises 184 residues: Gremlin-1 (184 aa).

Positions 1-24 (MSRTAYTVGALLLLLGTLLPAAEG) are cleaved as a signal peptide. Residues 24 to 77 (GKKKGSQGAIPPPDKAQHNDSEQTQSPQQPGSRNRGRGQGRGTAMPGEEVLESS) form a disordered region. A glycan (N-linked (GlcNAc...) asparagine) is linked at Asn-42. 4 disulfides stabilise this stretch: Cys-94/Cys-144, Cys-108/Cys-158, Cys-118/Cys-176, and Cys-122/Cys-178. The region spanning 94–184 (CKTQPLKQTI…QCRCISIDLD (91 aa)) is the CTCK domain.

Belongs to the DAN family. Homodimer; can also form homooligomers. Interacts with BMP2; can form higher oligomers with BMP2. Interacts with SLIT1 and SLIT2 in a glycosylation-dependent manner. Highly expressed in small intestine, fetal brain and colon. Expression is restricted to intestinal subepithelial myofibroblasts (ISEMFs) at the crypt base. In subjects with HMPS1, by contrast, GREM1 is expressed, not only in basal ISEMFs, but also at very high levels in epithelial cells (predominantly colonocytes), with expression extending most of the way up the sides of the crypt. Weakly expressed in brain, ovary, prostate, pancreas and skeletal muscle. In brain found in the region localized around the internal capsule in the large subcortical nuclei, including caudate, putamen, substantia nigra, thalamus and subthalamus. Predominantly expressed in normal cells including neurons, astrocytes and fibroblasts.

It is found in the secreted. Cytokine that may play an important role during carcinogenesis and metanephric kidney organogenesis, as a BMP antagonist required for early limb outgrowth and patterning in maintaining the FGF4-SHH feedback loop. Down-regulates the BMP4 signaling in a dose-dependent manner. Antagonist of BMP2; inhibits BMP2-mediated differentiation of osteoblasts (in vitro). Acts as inhibitor of monocyte chemotaxis. Can inhibit the growth or viability of normal cells but not transformed cells when is overexpressed. This Homo sapiens (Human) protein is Gremlin-1 (GREM1).